A 382-amino-acid polypeptide reads, in one-letter code: MTDFLPFSRPTMGDEEIAAVAEVLRSGWITTGPKCQQLEQAFCQQFGCQQAIAVSSATGGMHVTLMALGIGPGDEVITPSQTWVSTVNIITLLGAEPVMVDVDRHTLMVRSQDIEAAITPKTKAIIPVHYAGAPADLDALRALSERYGIPLIEDAAHAVGTQYRGEWIGARGTAIFSFHAIKNITCAEGGMVVTDDEALAERIRSLKFHGLGVDAFDRQLQGRKPQAEVVTPGFKYNLADINAAIALVQLDKLPAINARRQQLAARYLTQLHSLPLQPLAVPDYPHLHAWHLFMVRVDETQCGISRDDLMAALQTHGIGTGLHFRAVHTQKYYRERYPHLHLPETEWNSASLMTLPLFPDMQDSDVDRVVAALTSILESVRD.

K182 is modified (N6-(pyridoxal phosphate)lysine).

Belongs to the DegT/DnrJ/EryC1 family. ArnB subfamily. As to quaternary structure, homodimer. Pyridoxal 5'-phosphate serves as cofactor.

It carries out the reaction UDP-4-amino-4-deoxy-beta-L-arabinose + 2-oxoglutarate = UDP-beta-L-threo-pentopyranos-4-ulose + L-glutamate. The protein operates within nucleotide-sugar biosynthesis; UDP-4-deoxy-4-formamido-beta-L-arabinose biosynthesis; UDP-4-deoxy-4-formamido-beta-L-arabinose from UDP-alpha-D-glucuronate: step 2/3. Its pathway is bacterial outer membrane biogenesis; lipopolysaccharide biosynthesis. In terms of biological role, catalyzes the conversion of UDP-4-keto-arabinose (UDP-Ara4O) to UDP-4-amino-4-deoxy-L-arabinose (UDP-L-Ara4N). The modified arabinose is attached to lipid A and is required for resistance to polymyxin and cationic antimicrobial peptides. The polypeptide is UDP-4-amino-4-deoxy-L-arabinose--oxoglutarate aminotransferase (Pectobacterium atrosepticum (strain SCRI 1043 / ATCC BAA-672) (Erwinia carotovora subsp. atroseptica)).